Consider the following 654-residue polypeptide: DNA ligase (654 aa).

NAD(+)-binding positions include 34 to 38 (DLEYD), 83 to 84 (SL), and Glu114. Lys116 acts as the N6-AMP-lysine intermediate in catalysis. The NAD(+) site is built by Arg137, Glu171, Lys280, and Lys304. Positions 396, 399, 414, and 419 each coordinate Zn(2+). One can recognise a BRCT domain in the interval 577 to 654 (VISTILSGYT…EEQFYDLIKQ (78 aa)).

The protein belongs to the NAD-dependent DNA ligase family. LigA subfamily. It depends on Mg(2+) as a cofactor. The cofactor is Mn(2+).

It catalyses the reaction NAD(+) + (deoxyribonucleotide)n-3'-hydroxyl + 5'-phospho-(deoxyribonucleotide)m = (deoxyribonucleotide)n+m + AMP + beta-nicotinamide D-nucleotide.. Functionally, DNA ligase that catalyzes the formation of phosphodiester linkages between 5'-phosphoryl and 3'-hydroxyl groups in double-stranded DNA using NAD as a coenzyme and as the energy source for the reaction. It is essential for DNA replication and repair of damaged DNA. The protein is DNA ligase of Mycoplasmopsis agalactiae (strain NCTC 10123 / CIP 59.7 / PG2) (Mycoplasma agalactiae).